We begin with the raw amino-acid sequence, 422 residues long: Elongation factor 1-alpha (422 aa).

The tr-type G domain occupies 5–221 (KPHMNLAVIG…NSLKEPEKPS (217 aa)). The G1 stretch occupies residues 14–21 (GHIDHGKS). Position 14-21 (14-21 (GHIDHGKS)) interacts with GTP. S21 is a binding site for Mg(2+). The segment at 70–74 (GITID) is G2. The segment at 91–94 (DCPG) is G3. GTP is bound by residues 91–95 (DCPGH) and 146–149 (NKMD). The segment at 146 to 149 (NKMD) is G4. Residues 185-187 (SAF) form a G5 region.

The protein belongs to the TRAFAC class translation factor GTPase superfamily. Classic translation factor GTPase family. EF-Tu/EF-1A subfamily.

The protein localises to the cytoplasm. The enzyme catalyses GTP + H2O = GDP + phosphate + H(+). GTP hydrolase that promotes the GTP-dependent binding of aminoacyl-tRNA to the A-site of ribosomes during protein biosynthesis. This is Elongation factor 1-alpha from Methanosarcina mazei (strain ATCC BAA-159 / DSM 3647 / Goe1 / Go1 / JCM 11833 / OCM 88) (Methanosarcina frisia).